The sequence spans 361 residues: MLLELARWLQQLESLFGLFNYLTFRGILAALTALFLSLWMGPAVIRKLAQFKGGQPIRQDGPQTHFSKAGTPTMGGSLILLTVTLSVLLWGDLRNRYVWLVLAVMICFGAIGWYDDWIKIVRRDPNGLKSRWKYLLQSIFGLAAGLFLYYTADVPAAITFYIPMFKSIALPLAGVSFVVIAYFWIVGFSNAVNLTDGLDGLAIMPTVLVACALGVFAYASGNVVFAEYLKIPLIPGAGELIIICSAIAGAGLGFLWFNTYPAMVFMGDIGALSLGAVLGTIAVIVRQEMVLVIMGGVFVIETLSVIIQVASFKLTGKRVFRMAPIHHHFELKGWPEPRVIVRFWIISVVLVLIGLATLKVR.

Transmembrane regions (helical) follow at residues 25-45, 73-93, 98-118, 139-159, 168-188, 200-220, 237-257, 264-284, 289-309, and 339-359; these read RGIL…PAVI, TMGG…WGDL, VWLV…DDWI, IFGL…AAIT, IALP…IVGF, GLAI…AYAS, AGEL…FLWF, VFMG…IAVI, MVLV…IIQV, and VIVR…ATLK.

Belongs to the glycosyltransferase 4 family. MraY subfamily. Mg(2+) serves as cofactor.

It is found in the cell inner membrane. The enzyme catalyses UDP-N-acetyl-alpha-D-muramoyl-L-alanyl-gamma-D-glutamyl-meso-2,6-diaminopimeloyl-D-alanyl-D-alanine + di-trans,octa-cis-undecaprenyl phosphate = di-trans,octa-cis-undecaprenyl diphospho-N-acetyl-alpha-D-muramoyl-L-alanyl-D-glutamyl-meso-2,6-diaminopimeloyl-D-alanyl-D-alanine + UMP. It participates in cell wall biogenesis; peptidoglycan biosynthesis. In terms of biological role, catalyzes the initial step of the lipid cycle reactions in the biosynthesis of the cell wall peptidoglycan: transfers peptidoglycan precursor phospho-MurNAc-pentapeptide from UDP-MurNAc-pentapeptide onto the lipid carrier undecaprenyl phosphate, yielding undecaprenyl-pyrophosphoryl-MurNAc-pentapeptide, known as lipid I. The polypeptide is Phospho-N-acetylmuramoyl-pentapeptide-transferase (Xanthomonas oryzae pv. oryzae (strain PXO99A)).